Reading from the N-terminus, the 198-residue chain is Na(+)-translocating NADH-quinone reductase subunit E (198 aa).

Transmembrane regions (helical) follow at residues 11 to 31, 35 to 55, 77 to 97, 110 to 130, 140 to 160, and 176 to 196; these read SVFIENMALSFFLGMCTFLAV, VSTAFGLGVAVTVVLGISVPV, FLNFITFIGVIAALVQILEMI, GIFLPLITVNCAIFGGVSFMV, VVYGIGAGTGWMLAIVALAGI, and LGITFITVGLMALGFMSFSGV.

Belongs to the NqrDE/RnfAE family. As to quaternary structure, composed of six subunits; NqrA, NqrB, NqrC, NqrD, NqrE and NqrF.

The protein resides in the cell inner membrane. It carries out the reaction a ubiquinone + n Na(+)(in) + NADH + H(+) = a ubiquinol + n Na(+)(out) + NAD(+). NQR complex catalyzes the reduction of ubiquinone-1 to ubiquinol by two successive reactions, coupled with the transport of Na(+) ions from the cytoplasm to the periplasm. NqrA to NqrE are probably involved in the second step, the conversion of ubisemiquinone to ubiquinol. This is Na(+)-translocating NADH-quinone reductase subunit E from Histophilus somni (strain 129Pt) (Haemophilus somnus).